A 227-amino-acid polypeptide reads, in one-letter code: GRF-interacting factor 1 (227 aa).

Residues 186-227 (RSGSGAKEGSTSLSVDVRGGTSSGAQSGDGEYLKVGTEEEGS) form a disordered region.

Belongs to the SS18 family. As to quaternary structure, interacts with several GRFs. Interacts with GRF10. Interacts with GRF1. In terms of tissue distribution, expressed in shoots, aerial roots, ears and tassels. Expressed in the shoot apical meristem (SAM), young leaf primordia, leaf margins, inflorescence meristem, floral meristem and spikelet meristem.

Functionally, transcription coactivator that plays a role in the regulation of meristematic function in leaves, stems and inflorescences. Regulates shoot architecture and meristem determinacy. Binds to the inflorescence architecture gene UB3 (unbranched3). Regulates the expression of several genes involved in inflorescence architecture. Component of a network formed by the microRNA396 (miRNA396), the GRFs and their interacting factors (GIFs) acting in the regulation of meristem function, at least partially through the control of cell proliferation. Associates with the core SWI/SNF chromatin-remodeling complex and specific GRFs to tightly regulate the transition between cell division and cell expansion in growing leaves. The chain is GRF-interacting factor 1 from Zea mays (Maize).